We begin with the raw amino-acid sequence, 834 residues long: Sodium/hydrogen exchanger 3 (834 aa).

The first 25 residues, 1-25 (MWGLGARGPDRGLLLALALGGLARA), serve as a signal peptide directing secretion. Topologically, residues 26–51 (GGVEVEPGGAHGESGGFQVVTFEWAH) are extracellular. A helical transmembrane segment spans residues 52 to 74 (VQDPYVIALWILVASLAKIGFHL). Residues 75 to 82 (SHKVTSVV) are Cytoplasmic-facing. A helical transmembrane segment spans residues 83–102 (PESALLIVLGLVLGGIVWAA). Residues 103 to 111 (DHIASFTLT) are Extracellular-facing. Residues 112–129 (PTVFFFYLLPPIVLDAGY) traverse the membrane as a helical segment. Residues 130–132 (FMP) are Cytoplasmic-facing. A helical membrane pass occupies residues 133 to 168 (NRLFFGNLGTILLYAVVGTVWNAATTGLSLYGVFLS). Gly-138, Gly-141, and Thr-142 together coordinate a 1,2-diacyl-sn-glycero-3-phospho-(1D-myo-inositol). Residues 169–181 (GLMGDLQIGLLDF) are Extracellular-facing. Residues 182–203 (LLFGSLMAAVDPVAVLAVFEEV) form a helical membrane-spanning segment. Topologically, residues 204–205 (HV) are cytoplasmic. A helical membrane pass occupies residues 206 to 237 (NEVLFIIVFGESLLNDAVTVVLYNVFESFVAL). Over 238–244 (GGDNVTG) the chain is Extracellular. Asn-241 carries N-linked (GlcNAc...) asparagine glycosylation. Residues 245 to 279 (VDCVKGIVSFFVVSLGGTLVGVVFAFLLSLVTRFT) traverse the membrane as a helical segment. Residues 280–281 (KH) are Cytoplasmic-facing. The helical transmembrane segment at 282-304 (VRIIEPGFVFIISYLSYLTSEML) threads the bilayer. The Extracellular segment spans residues 305–306 (SL). Residues 307–323 (SAILAITFCGICCQKYV) form a helical membrane-spanning segment. Over 324–330 (KANISEQ) the chain is Cytoplasmic. A helical transmembrane segment spans residues 331–359 (SATTVRYTMKMLASSAETIIFMFLGISAV). The Extracellular portion of the chain corresponds to 360–367 (NPFIWTWN). A helical membrane pass occupies residues 368 to 389 (TAFVLLTLVFISVYRAIGVVLQ). The Cytoplasmic segment spans residues 390 to 402 (TWLLNRYRMVQLE). A 1,2-diacyl-sn-glycero-3-phospho-(1D-myo-inositol) is bound at residue Met-398. A helical membrane pass occupies residues 403 to 426 (PIDQVVLSYGGLRGAVAFALVVLL). The Extracellular portion of the chain corresponds to 427–433 (DGDKVKE). The chain crosses the membrane as a helical span at residues 434 to 467 (KNLFVSTTIIVVFFTVIFQGLTIKPLVQWLKVKR). Residues 468 to 834 (SEHREPRLNE…PAALPESTHM (367 aa)) lie on the Cytoplasmic side of the membrane. A 1,2-diacyl-sn-glycero-3-phospho-(1D-myo-inositol) contacts are provided by Gln-497, Ile-498, and His-500. Residues Ser-555 and Ser-563 each carry the phosphoserine modification. The interval 575–589 (RSSTVEASVSYLLRE) is interaction with EZR. The tract at residues 590-667 (NVSAVCLDMQ…RKRLESFKST (78 aa)) is interaction with NHERF4. Positions 591-695 (VSAVCLDMQS…AQKRRNSSIP (105 aa)) are interaction with AHCYL1. Residues Ser-592 and Ser-607 each carry the phosphoserine modification. Ser-663 carries the phosphoserine; by SGK1 modification. Over residues 679 to 691 (KLYKRERAQKRRN) the composition is skewed to basic residues. The tract at residues 679–728 (KLYKRERAQKRRNSSIPNGKLPMESPAQNFTIKEKDLELSDTEEPPNYDE) is disordered. The segment covering 717–728 (LSDTEEPPNYDE) has biased composition (acidic residues). Ser-718, Ser-810, and Ser-813 each carry phosphoserine. The interval 814–834 (FLQADGPEERPPAALPESTHM) is disordered.

This sequence belongs to the monovalent cation:proton antiporter 1 (CPA1) transporter (TC 2.A.36) family. In terms of assembly, homodimer. Found in the forms of complex and dynamic macromolecular complexes. Binds NHERF1 and NHERF2. Interacts with CHP1; increases SLC9A3 trafficking and activity at the plasma membrane. Interacts with CHP2 and SHANK2. Interacts with PDZK1 (via C-terminal PDZ domain). Interacts with NHERF4 and interaction decrease in response to elevated calcium ion levels. Interacts with AHCYL1; the interaction is required for SLC9A3 activity. Interacts with SNX27 (via PDZ domains); directs SLC9A3 membrane insertion from early endosomes to the plasma membrane. Interacts with EZR; interaction targets SLC9A3 to the apical membrane. Post-translationally, phosphorylated by PKA, which inhibits activity. Phosphorylation at Ser-663 by SGK1 is associated with increased abundance at the cell membrane. Phosphorylation at Ser-718 by CSNK2A1 regulates SLC9A3 activity through the formation of multiple signaling complexes.

It localises to the apical cell membrane. The protein localises to the cell membrane. It is found in the recycling endosome membrane. The protein resides in the early endosome membrane. The enzyme catalyses Na(+)(in) + H(+)(out) = Na(+)(out) + H(+)(in). Its activity is regulated as follows. Seems to switch between active and inactive modes in response to various stimuli. Activated directly or indirectly by membrane phosphatidylinositol (PIs). Regulated by a variety of auxiliary proteins, which facilitate the maturation, cell surface expression and function of the transporter. Inhibited specifically by the drug tenapanor. Its function is as follows. Plasma membrane Na(+)/H(+) antiporter. Exchanges intracellular H(+) ions for extracellular Na(+) in 1:1 stoichiometry, playing a key role in salt and fluid absorption and pH homeostasis. Major apical Na(+)/H(+) exchanger in kidney and intestine playing an important role in renal and intestine Na(+) absorption and blood pressure regulation. The polypeptide is Sodium/hydrogen exchanger 3 (Homo sapiens (Human)).